Consider the following 429-residue polypeptide: Glutamate dehydrogenase B (429 aa).

The interval 1–20 (MAQTPPPESAPSTDSEPETA) is disordered. The active site involves Lys-119.

It belongs to the Glu/Leu/Phe/Val dehydrogenases family. As to quaternary structure, homohexamer.

The polypeptide is Glutamate dehydrogenase B (gdhB) (Halobacterium salinarum (strain ATCC 700922 / JCM 11081 / NRC-1) (Halobacterium halobium)).